The sequence spans 477 residues: Protoporphyrinogen oxidase (477 aa).

FAD is bound by residues 9-14 (GGGISG), W42, 57-60 (GPRG), V257, A449, and 454-456 (VAV).

Belongs to the protoporphyrinogen/coproporphyrinogen oxidase family. Protoporphyrinogen oxidase subfamily. As to quaternary structure, monomer. Homodimer. The cofactor is FAD.

It localises to the mitochondrion inner membrane. It carries out the reaction protoporphyrinogen IX + 3 O2 = protoporphyrin IX + 3 H2O2. The protein operates within porphyrin-containing compound metabolism; protoporphyrin-IX biosynthesis; protoporphyrin-IX from protoporphyrinogen-IX: step 1/1. Its function is as follows. Catalyzes the 6-electron oxidation of protoporphyrinogen-IX to form protoporphyrin-IX. In Macaca fascicularis (Crab-eating macaque), this protein is Protoporphyrinogen oxidase (PPOX).